A 90-amino-acid polypeptide reads, in one-letter code: UPF0367 protein SYNPCC7002_A0153 (90 aa).

It belongs to the UPF0367 family.

The sequence is that of UPF0367 protein SYNPCC7002_A0153 from Picosynechococcus sp. (strain ATCC 27264 / PCC 7002 / PR-6) (Agmenellum quadruplicatum).